We begin with the raw amino-acid sequence, 538 residues long: Nucleobase-ascorbate transporter 7 (538 aa).

Residues 1–11 (MAGGGGGGGGV) are compositionally biased toward gly residues. Residues 1 to 20 (MAGGGGGGGGVAPPLKHDGL) form a disordered region. A run of 12 helical transmembrane segments spans residues 45–65 (AILL…LIPT), 81–101 (MVQT…FFGT), 103–123 (LPAV…IILA), 143–163 (IQGA…SGLW), 166–186 (VVRL…GFGL), 191–211 (FPLL…LLLF), 229–249 (FAVI…TVGG), 295–315 (FAMM…YIVV), 372–394 (VVQI…AIFA), 398–420 (APVV…LSLL), 432–452 (FILG…NQYT), and 471–491 (INVP…FLDV).

Belongs to the nucleobase:cation symporter-2 (NCS2) (TC 2.A.40) family. Expressed exclusively in ovules.

The protein localises to the cell membrane. This chain is Nucleobase-ascorbate transporter 7 (NAT7), found in Arabidopsis thaliana (Mouse-ear cress).